Reading from the N-terminus, the 714-residue chain is ATP-dependent DNA helicase DinG (714 aa).

The 278-residue stretch at 17 to 294 (ALQDQIPDFI…TCMEQFRPKT (278 aa)) folds into the Helicase ATP-binding domain. 54–61 (APTGVGKT) contacts ATP. Residues Cys120, Cys194, Cys199, and Cys205 each contribute to the [4Fe-4S] cluster site. Positions 248–251 (DEGH) match the DEAH box motif. The 182-residue stretch at 517–698 (HIAEMAAYFR…VFPIEQPAVP (182 aa)) folds into the Helicase C-terminal domain.

Belongs to the helicase family. DinG subfamily. Type 1 sub-subfamily. [4Fe-4S] cluster is required as a cofactor.

The enzyme catalyses Couples ATP hydrolysis with the unwinding of duplex DNA at the replication fork by translocating in the 5'-3' direction. This creates two antiparallel DNA single strands (ssDNA). The leading ssDNA polymer is the template for DNA polymerase III holoenzyme which synthesizes a continuous strand.. The catalysed reaction is ATP + H2O = ADP + phosphate + H(+). Functionally, DNA-dependent ATPase and 5'-3' DNA helicase. Unwinds D-loops, R-loops, forked DNA and G-quadruplex DNA. This chain is ATP-dependent DNA helicase DinG, found in Salmonella paratyphi A (strain ATCC 9150 / SARB42).